The sequence spans 78 residues: Mu-conotoxin BuIIIB (78 aa).

Residues 1-22 (MMSKLGVLLTICLLLFPLFALP) form the signal peptide. Residues 23–51 (QDGDQPADRPAERMQDDISSEQNPLLEKR) constitute a propeptide that is removed on maturation. The interval 26–46 (DQPADRPAERMQDDISSEQNP) is disordered. Residues 28–38 (PADRPAERMQD) are compositionally biased toward basic and acidic residues. 3 disulfide bridges follow: Cys-56–Cys-68, Cys-57–Cys-74, and Cys-64–Cys-75. Residue Cys-75 is modified to Cysteine amide.

Belongs to the conotoxin M superfamily. In terms of tissue distribution, expressed by the venom duct.

It is found in the secreted. Functionally, mu-conotoxins block voltage-gated sodium channels (Nav). This synthetic toxin potently blocks rNav1.4/SCN4A (Kd=0.34-3.6 nM), rNav1.2/SCN2A (Kd=13 nM), rNav1.3/SCN3A (Kd=200 nM), rNav1.1/SCN1A (Kd=360 nM), mNav1.6/SCN8A (IC(50)=1.8 uM), rNav1.5/SCN5A (IC(50)=9 uM), rNav1.6/SCN8A (IC(50)&gt;30 uM). It is noteworthy that the toxin is 50-fold more potent on mouse Nav1.6 than on rat Nav1.6. The block of SCN4A is very slowly reversible. In Conus bullatus (Bubble cone), this protein is Mu-conotoxin BuIIIB.